We begin with the raw amino-acid sequence, 243 residues long: MSRAPLPLAAHERLIFALDVPGHDEAIAWVDRLGDSVSFYKIGMELLASGEYFHVLDALAKRDKRVFVDLKFFDIPATVAGTIRRLAQWPVSYCTVHGWHAGMLQAAAEANHGDMRLLAVTVLTSMGRPDLAAMGIDREPVDVVVERALAAQAAGIDGVIASGQEAGPIRRATGPDFSIVCPGIRPGGPVGDDQQRTVGVAQAFTDGADAIVVGRPIRQASDPAAAATAIQDEIRAALPQNGN.

Substrate is bound by residues Asp19, Lys41, 69–78, Thr124, Arg185, Gln194, Gly214, and Arg215; that span reads DLKFFDIPAT. The active-site Proton donor is Lys71.

The protein belongs to the OMP decarboxylase family. Type 1 subfamily. In terms of assembly, homodimer.

It catalyses the reaction orotidine 5'-phosphate + H(+) = UMP + CO2. It functions in the pathway pyrimidine metabolism; UMP biosynthesis via de novo pathway; UMP from orotate: step 2/2. Its function is as follows. Catalyzes the decarboxylation of orotidine 5'-monophosphate (OMP) to uridine 5'-monophosphate (UMP). This chain is Orotidine 5'-phosphate decarboxylase, found in Xanthomonas euvesicatoria pv. vesicatoria (strain 85-10) (Xanthomonas campestris pv. vesicatoria).